The sequence spans 568 residues: TWiK family of potassium channels protein 9 (568 aa).

Over 1–15 (MKCSFHIPEKYQWAS) the chain is Cytoplasmic. Residues 16–36 (TLFVHVALIAGVAVYTVFGAL) form a helical membrane-spanning segment. Positions 163 to 183 (IGNSVIFAFTVITTIGYGHVA) form an intramembrane region, pore-forming. A helical transmembrane segment spans residues 191-211 (LFLIFYGVIGVPFTLLTIADL). Residues 212–316 (GMFLTRFLKN…NNEPRKTEES (105 aa)) are Cytoplasmic-facing. Disordered regions lie at residues 243–262 (QRNK…RSEV) and 274–314 (MRTA…RKTE). Acidic residues predominate over residues 297–307 (GKEEDEEEPEN). The helical transmembrane segment at 317–337 (IALGITFTCYLVAGAKILSVY) threads the bilayer. The segment at residues 343–363 (FFKALYFNFVTLTTIGLGDFV) is an intramembrane region (pore-forming). Residues 370 to 390 (LLITLIYIGIGLALTTMAIEI) traverse the membrane as a helical segment. At 391 to 568 (AADLLKKLHY…LRTYTNARRK (178 aa)) the chain is on the cytoplasmic side.

The protein belongs to the two pore domain potassium channel (TC 1.A.1.8) family. As to expression, expressed in ray A-type neurons and cell bodies. Also seen in head, pharyngeal and phasmid neurons, and in coelomocytes.

The protein resides in the membrane. Potassium channel protein that may be component of regulatory network that controls ray development and function. The polypeptide is TWiK family of potassium channels protein 9 (twk-9) (Caenorhabditis elegans).